We begin with the raw amino-acid sequence, 154 residues long: Ribosome maturation factor RimP (154 aa).

Belongs to the RimP family.

The protein resides in the cytoplasm. Required for maturation of 30S ribosomal subunits. The protein is Ribosome maturation factor RimP of Prochlorococcus marinus (strain MIT 9303).